We begin with the raw amino-acid sequence, 198 residues long: DnaJ homolog subfamily C member 12 (198 aa).

Met-1 is modified (N-acetylmethionine). Residues 14–79 form the J domain; that stretch reads DYYTLLGCDE…ESRARYDHWR (66 aa). Residues 121 to 183 are disordered; that stretch reads TNTAQNKERS…CGHLHFRWSG (63 aa). Residues 126-156 are compositionally biased toward basic and acidic residues; it reads NKERSEQRETKQGDPDSTPEKMMQKESESPE. Ser-160, Ser-166, and Ser-182 each carry phosphoserine.

As to quaternary structure, interacts with HSPA8. Interacts with TPH1. Interacts with TPH2.

It localises to the cytoplasm. In terms of biological role, probable co-chaperone that participates in the proper folding of biopterin-dependent aromatic amino acid hydroxylases, which include phenylalanine-4-hydroxylase (PAH), tyrosine 3-monooxygenase (TH) and peripheral and neuronal tryptophan hydroxylases (TPH1 and TPH2). In Rattus norvegicus (Rat), this protein is DnaJ homolog subfamily C member 12 (Dnajc12).